The following is a 212-amino-acid chain: Large ribosomal subunit protein uL3 (212 aa).

Gln-153 carries the post-translational modification N5-methylglutamine.

Belongs to the universal ribosomal protein uL3 family. As to quaternary structure, part of the 50S ribosomal subunit. Forms a cluster with proteins L14 and L19. In terms of processing, methylated by PrmB.

One of the primary rRNA binding proteins, it binds directly near the 3'-end of the 23S rRNA, where it nucleates assembly of the 50S subunit. This is Large ribosomal subunit protein uL3 from Shewanella sediminis (strain HAW-EB3).